The chain runs to 159 residues: MAKKNQKSGSNTIALNKKAKFDYELHERFEAGLALTGWEVKSLRAGKGNITDCYVIFKNNEAWLQACQIQPLLSASTHFVTDPFRNRKLLLNRREINRLQEAVEQKGYTVVPIALYWKAHMVKCEIAIAKGKQLHDKRQTEKERDWEREKQRLFQRDQR.

The tract at residues 137 to 159 is disordered; that stretch reads KRQTEKERDWEREKQRLFQRDQR.

It belongs to the SmpB family.

It localises to the cytoplasm. In terms of biological role, required for rescue of stalled ribosomes mediated by trans-translation. Binds to transfer-messenger RNA (tmRNA), required for stable association of tmRNA with ribosomes. tmRNA and SmpB together mimic tRNA shape, replacing the anticodon stem-loop with SmpB. tmRNA is encoded by the ssrA gene; the 2 termini fold to resemble tRNA(Ala) and it encodes a 'tag peptide', a short internal open reading frame. During trans-translation Ala-aminoacylated tmRNA acts like a tRNA, entering the A-site of stalled ribosomes, displacing the stalled mRNA. The ribosome then switches to translate the ORF on the tmRNA; the nascent peptide is terminated with the 'tag peptide' encoded by the tmRNA and targeted for degradation. The ribosome is freed to recommence translation, which seems to be the essential function of trans-translation. This is SsrA-binding protein from Cellvibrio japonicus (strain Ueda107) (Pseudomonas fluorescens subsp. cellulosa).